The chain runs to 361 residues: ATP-dependent 6-phosphofructokinase 1 (361 aa).

ATP contacts are provided by residues G14, 79 to 80, and 116 to 119; these read KG and GDGS. A Mg(2+)-binding site is contributed by D117. Substrate contacts are provided by residues 140–142, R177, 184–186, E237, R278, and 284–287; these read TID, MGR, and HIQR. D142 functions as the Proton acceptor in the catalytic mechanism.

This sequence belongs to the phosphofructokinase type A (PFKA) family. Mixed-substrate PFK group III subfamily. Homodimer or homotetramer. It depends on Mg(2+) as a cofactor.

The protein localises to the cytoplasm. The enzyme catalyses beta-D-fructose 6-phosphate + ATP = beta-D-fructose 1,6-bisphosphate + ADP + H(+). It functions in the pathway carbohydrate degradation; glycolysis; D-glyceraldehyde 3-phosphate and glycerone phosphate from D-glucose: step 3/4. Its function is as follows. Catalyzes the phosphorylation of D-fructose 6-phosphate to fructose 1,6-bisphosphate by ATP, the first committing step of glycolysis. This chain is ATP-dependent 6-phosphofructokinase 1, found in Synechocystis sp. (strain ATCC 27184 / PCC 6803 / Kazusa).